The sequence spans 375 residues: tRNA-specific 2-thiouridylase MnmA (375 aa).

Residues 13–20 and Met39 each bind ATP; that span reads AMSGGVDS. Catalysis depends on Cys111, which acts as the Nucleophile. An intrachain disulfide couples Cys111 to Cys208. ATP is bound at residue Gly135. Positions 158 to 160 are interaction with tRNA; that stretch reads KDQ. The active-site Cysteine persulfide intermediate is the Cys208. The interaction with tRNA stretch occupies residues 313 to 314; it reads RY.

This sequence belongs to the MnmA/TRMU family.

It localises to the cytoplasm. It catalyses the reaction S-sulfanyl-L-cysteinyl-[protein] + uridine(34) in tRNA + AH2 + ATP = 2-thiouridine(34) in tRNA + L-cysteinyl-[protein] + A + AMP + diphosphate + H(+). Its function is as follows. Catalyzes the 2-thiolation of uridine at the wobble position (U34) of tRNA, leading to the formation of s(2)U34. The sequence is that of tRNA-specific 2-thiouridylase MnmA from Geotalea uraniireducens (strain Rf4) (Geobacter uraniireducens).